The primary structure comprises 199 residues: uncharacterized protein (199 aa).

Residues 1-41 are disordered; that stretch reads MKFKRDENQNSTHHRGNKNNTNNDDDDKEEEEEIINDTTMP. Residues 23-35 are compositionally biased toward acidic residues; it reads NDDDDKEEEEEII. The next 3 helical transmembrane spans lie at 73–93, 96–116, and 166–186; these read LILD…FAFW, ISTY…VSFL, and IAIA…SPYL.

It localises to the membrane. This is an uncharacterized protein from Dictyostelium discoideum (Social amoeba).